Reading from the N-terminus, the 447-residue chain is tRNA-2-methylthio-N(6)-dimethylallyladenosine synthase (447 aa).

An MTTase N-terminal domain is found at Lys3–Thr120. [4Fe-4S] cluster is bound by residues Cys12, Cys49, Cys83, Cys157, Cys161, and Cys164. The Radical SAM core domain occupies Arg143–Glu375. In terms of domain architecture, TRAM spans Arg378–Asp442.

This sequence belongs to the methylthiotransferase family. MiaB subfamily. Monomer. [4Fe-4S] cluster serves as cofactor.

It localises to the cytoplasm. The catalysed reaction is N(6)-dimethylallyladenosine(37) in tRNA + (sulfur carrier)-SH + AH2 + 2 S-adenosyl-L-methionine = 2-methylsulfanyl-N(6)-dimethylallyladenosine(37) in tRNA + (sulfur carrier)-H + 5'-deoxyadenosine + L-methionine + A + S-adenosyl-L-homocysteine + 2 H(+). Catalyzes the methylthiolation of N6-(dimethylallyl)adenosine (i(6)A), leading to the formation of 2-methylthio-N6-(dimethylallyl)adenosine (ms(2)i(6)A) at position 37 in tRNAs that read codons beginning with uridine. In Ectopseudomonas mendocina (strain ymp) (Pseudomonas mendocina), this protein is tRNA-2-methylthio-N(6)-dimethylallyladenosine synthase.